The sequence spans 231 residues: ADP-ribosylation factor-like protein 6-interacting protein 4 (231 aa).

Basic residues predominate over residues 1-19 (MAHVSSRKRSRSRSRSRGR). A disordered region spans residues 1–154 (MAHVSSRKRS…EDNDGPVLTD (154 aa)). Positions 20–34 (RGSEKRSKRSSKDSS) are enriched in basic and acidic residues. Low complexity predominate over residues 64–89 (TSRSSSSSSSSSSSSSSSSTSSSSSS). The span at 92–119 (RKKRGKHKDKKKRKKKKKRKKKMKRKGK) shows a compositional bias: basic residues. Phosphoserine occurs at positions 142 and 176. Lys193 is covalently cross-linked (Glycyl lysine isopeptide (Lys-Gly) (interchain with G-Cter in SUMO2)).

The protein belongs to the ARL6IP4 family. In terms of assembly, interacts with ARL6. Interacts with ZCCHC17. Interacts with SRSF2.

The protein localises to the nucleus. Its subcellular location is the nucleolus. It localises to the nucleus speckle. Functionally, involved in modulating alternative pre-mRNA splicing with either 5' distal site activation or preferential use of 3' proximal site. This Rattus norvegicus (Rat) protein is ADP-ribosylation factor-like protein 6-interacting protein 4 (Arl6ip4).